The sequence spans 335 residues: DNA-directed RNA polymerase subunit alpha (335 aa).

The alpha N-terminal domain (alpha-NTD) stretch occupies residues 1–231 (MVREKVTVST…DLFIPFLHME (231 aa)). Positions 262–335 (KKKLSLESIF…FALDLPKNLN (74 aa)) are alpha C-terminal domain (alpha-CTD).

Belongs to the RNA polymerase alpha chain family. In terms of assembly, in plastids the minimal PEP RNA polymerase catalytic core is composed of four subunits: alpha, beta, beta', and beta''. When a (nuclear-encoded) sigma factor is associated with the core the holoenzyme is formed, which can initiate transcription.

It is found in the plastid. It catalyses the reaction RNA(n) + a ribonucleoside 5'-triphosphate = RNA(n+1) + diphosphate. Its function is as follows. DNA-dependent RNA polymerase catalyzes the transcription of DNA into RNA using the four ribonucleoside triphosphates as substrates. This chain is DNA-directed RNA polymerase subunit alpha, found in Cuscuta reflexa (Southern Asian dodder).